Consider the following 410-residue polypeptide: Riboflavin biosynthesis protein RibBA (410 aa).

The DHBP synthase stretch occupies residues 1–205 (MENKRIDTIE…IKDLVAFQMR (205 aa)). Residues 30-31 (RE), Asp35, 144-148 (RVGHT), and Glu168 each bind D-ribulose 5-phosphate. Glu31 is a binding site for Mg(2+). His147 serves as a coordination point for Mg(2+). The GTP cyclohydrolase II stretch occupies residues 206–410 (RSKLVQRAVE…ISCSCGSGNH (205 aa)). 256 to 260 (RVHSQ) contacts GTP. Residues Cys261, Cys272, and Cys274 each contribute to the Zn(2+) site. Residues Gln277, 299–301 (EGR), and Thr321 each bind GTP. Asp333 serves as the catalytic Proton acceptor; for GTP cyclohydrolase activity. Arg335 serves as the catalytic Nucleophile; for GTP cyclohydrolase activity. Thr356 and Lys361 together coordinate GTP.

This sequence in the N-terminal section; belongs to the DHBP synthase family. In the C-terminal section; belongs to the GTP cyclohydrolase II family. Mg(2+) is required as a cofactor. The cofactor is Mn(2+). Requires Zn(2+) as cofactor.

The catalysed reaction is D-ribulose 5-phosphate = (2S)-2-hydroxy-3-oxobutyl phosphate + formate + H(+). It catalyses the reaction GTP + 4 H2O = 2,5-diamino-6-hydroxy-4-(5-phosphoribosylamino)-pyrimidine + formate + 2 phosphate + 3 H(+). Its pathway is cofactor biosynthesis; riboflavin biosynthesis; 2-hydroxy-3-oxobutyl phosphate from D-ribulose 5-phosphate: step 1/1. It participates in cofactor biosynthesis; riboflavin biosynthesis; 5-amino-6-(D-ribitylamino)uracil from GTP: step 1/4. In terms of biological role, catalyzes the conversion of D-ribulose 5-phosphate to formate and 3,4-dihydroxy-2-butanone 4-phosphate. Functionally, catalyzes the conversion of GTP to 2,5-diamino-6-ribosylamino-4(3H)-pyrimidinone 5'-phosphate (DARP), formate and pyrophosphate. The chain is Riboflavin biosynthesis protein RibBA from Chlorobium phaeovibrioides (strain DSM 265 / 1930) (Prosthecochloris vibrioformis (strain DSM 265)).